The sequence spans 385 residues: Outer membrane protein assembly factor BamB (385 aa).

An N-terminal signal peptide occupies residues 1–20 (MRKVLKKAALCTFGFSMLFG). C21 carries N-palmitoyl cysteine lipidation. The S-diacylglycerol cysteine moiety is linked to residue C21.

This sequence belongs to the BamB family. Part of the Bam complex.

It is found in the cell outer membrane. In terms of biological role, part of the outer membrane protein assembly complex, which is involved in assembly and insertion of beta-barrel proteins into the outer membrane. This chain is Outer membrane protein assembly factor BamB, found in Aliivibrio fischeri (strain ATCC 700601 / ES114) (Vibrio fischeri).